Reading from the N-terminus, the 360-residue chain is DNA integrity scanning protein DisA (360 aa).

Residues 9-147 (DNDLMDILNI…NNIKYVLRDS (139 aa)) form the DAC domain. ATP is bound by residues G76, L94, and 107-111 (TRHRT).

It belongs to the DisA family. As to quaternary structure, homooctamer. The cofactor is Mg(2+).

It catalyses the reaction 2 ATP = 3',3'-c-di-AMP + 2 diphosphate. Its function is as follows. Participates in a DNA-damage check-point that is active prior to asymmetric division when DNA is damaged. DisA forms globular foci that rapidly scan along the chromosomes during sporulation, searching for lesions. When a lesion is present, DisA pauses at the lesion site. This triggers a cellular response that culminates in a temporary block in sporulation initiation. Functionally, also has diadenylate cyclase activity, catalyzing the condensation of 2 ATP molecules into cyclic di-AMP (c-di-AMP). c-di-AMP acts as a signaling molecule that couples DNA integrity with progression of sporulation. The rise in c-di-AMP level generated by DisA while scanning the chromosome, operates as a positive signal that advances sporulation; upon encountering a lesion, the DisA focus arrests at the damaged site and halts c-di-AMP synthesis. This is DNA integrity scanning protein DisA from Clostridium tetani (strain Massachusetts / E88).